A 276-amino-acid polypeptide reads, in one-letter code: Large ribosomal subunit protein uL2 (276 aa).

Disordered regions lie at residues 29 to 55 and 219 to 276; these read PEKS…RHRG and HVRG…RRTR. Over residues 259-276 the composition is skewed to basic residues; the sequence is TRNKKKQSSKLIVRRRTR.

It belongs to the universal ribosomal protein uL2 family. Part of the 50S ribosomal subunit. Forms a bridge to the 30S subunit in the 70S ribosome.

One of the primary rRNA binding proteins. Required for association of the 30S and 50S subunits to form the 70S ribosome, for tRNA binding and peptide bond formation. It has been suggested to have peptidyltransferase activity; this is somewhat controversial. Makes several contacts with the 16S rRNA in the 70S ribosome. The protein is Large ribosomal subunit protein uL2 of Rippkaea orientalis (strain PCC 8801 / RF-1) (Cyanothece sp. (strain PCC 8801)).